We begin with the raw amino-acid sequence, 468 residues long: Beta-monoglucosyldiacylglycerol synthase (468 aa).

4 helical membrane-spanning segments follow: residues 51-71 (AALV…VSWG), 72-92 (SIFI…VVFA), 358-378 (MLMF…DLLM), and 387-407 (MLGP…FAGL).

Belongs to the glycosyltransferase 2 family. The cofactor is Mg(2+).

The protein resides in the membrane. It carries out the reaction a 1,2-diacyl-sn-glycerol + UDP-alpha-D-glucose = a 1,2-diacyl-3-O-(beta-D-glucopyranosyl)-sn-glycerol + UDP + H(+). Glucosyltransferase involved in the biosynthesis of the non-bilayer-forming membrane lipid beta-monoglucosyldiacylglycerol which contributes to regulate the properties and stability of the membrane. Catalyzes the transfer of a glucosyl residue from UDP-Glc to diacylglycerol (DAG) acceptor to form the corresponding beta-glucosyl-DAG (1,2-diacyl-3-O-(beta-D-glucopyranosyl)-sn-glycerol). It can only use UDP-Glc as sugar donor. Two types of DAG (dipalmitoyl-DAG (DPDAG) and 1-oleoyl-2-palmitoyl-DAG (OPDAG)) can be used as sugar acceptors, but OPDAG is preferred. The protein is Beta-monoglucosyldiacylglycerol synthase of Nostoc sp. (strain PCC 7120 / SAG 25.82 / UTEX 2576).